Consider the following 355-residue polypeptide: Peptide chain release factor 1 (355 aa).

Position 231 is an N5-methylglutamine (Q231).

This sequence belongs to the prokaryotic/mitochondrial release factor family. Methylated by PrmC. Methylation increases the termination efficiency of RF1.

The protein localises to the cytoplasm. Functionally, peptide chain release factor 1 directs the termination of translation in response to the peptide chain termination codons UAG and UAA. The chain is Peptide chain release factor 1 from Erythrobacter litoralis (strain HTCC2594).